Here is a 349-residue protein sequence, read N- to C-terminus: Adenosine deaminase (349 aa).

Residues His25 and His27 each contribute to the Zn(2+) site. The substrate site is built by His27, Asp29, and Gly182. His209 serves as a coordination point for Zn(2+). Residue Glu212 is the Proton donor of the active site. Zn(2+) is bound at residue Asp289.

Belongs to the metallo-dependent hydrolases superfamily. Adenosine and AMP deaminases family. Adenosine deaminase subfamily. The cofactor is Zn(2+).

It catalyses the reaction adenosine + H2O + H(+) = inosine + NH4(+). It carries out the reaction 2'-deoxyadenosine + H2O + H(+) = 2'-deoxyinosine + NH4(+). In terms of biological role, catalyzes the hydrolytic deamination of adenosine and 2-deoxyadenosine. The protein is Adenosine deaminase of Streptococcus mutans serotype c (strain ATCC 700610 / UA159).